The sequence spans 382 residues: Methenyltetrahydrofolate synthase domain-containing protein (382 aa).

Positions 306–382 (TTVYLSDIPP…QAKCVSSQKM (77 aa)) constitute an RRM domain.

The polypeptide is Methenyltetrahydrofolate synthase domain-containing protein (mthfsd) (Danio rerio (Zebrafish)).